A 391-amino-acid chain; its full sequence is 3-ketoacyl-CoA thiolase (391 aa).

Residue Cys-95 is the Acyl-thioester intermediate of the active site. Residues His-347 and Cys-377 each act as proton acceptor in the active site.

It belongs to the thiolase-like superfamily. Thiolase family. Heterotetramer of two alpha chains (FadB) and two beta chains (FadA).

The protein resides in the cytoplasm. It catalyses the reaction an acyl-CoA + acetyl-CoA = a 3-oxoacyl-CoA + CoA. It participates in lipid metabolism; fatty acid beta-oxidation. Catalyzes the final step of fatty acid oxidation in which acetyl-CoA is released and the CoA ester of a fatty acid two carbons shorter is formed. In Pseudomonas savastanoi pv. phaseolicola (strain 1448A / Race 6) (Pseudomonas syringae pv. phaseolicola (strain 1448A / Race 6)), this protein is 3-ketoacyl-CoA thiolase.